The sequence spans 238 residues: Fmr1 neighbor protein (238 aa).

A disordered region spans residues Met-1–Asp-30. Over Met-1 to His-79 the chain is Cytoplasmic. A compositionally biased stretch (basic and acidic residues) spans Lys-15 to Asp-30. A helical membrane pass occupies residues Leu-80 to Ala-100. The Extracellular segment spans residues Lys-101 to Arg-178. The P-type domain maps to Met-118–Val-176. Residues Val-179 to Ser-199 traverse the membrane as a helical segment. Residues Met-200 to His-238 are Cytoplasmic-facing. The span at Leu-214–Arg-227 shows a compositional bias: basic residues. The segment at Leu-214–His-238 is disordered. The segment covering Lys-228–His-238 has biased composition (basic and acidic residues).

Its subcellular location is the membrane. In Mus musculus (Mouse), this protein is Fmr1 neighbor protein.